The sequence spans 215 residues: Pyrrolidone-carboxylate peptidase (215 aa).

Active-site residues include glutamate 78, cysteine 141, and histidine 165.

Belongs to the peptidase C15 family. As to quaternary structure, homotetramer.

The protein resides in the cytoplasm. The enzyme catalyses Release of an N-terminal pyroglutamyl group from a polypeptide, the second amino acid generally not being Pro.. Removes 5-oxoproline from various penultimate amino acid residues except L-proline. This chain is Pyrrolidone-carboxylate peptidase, found in Streptococcus suis (strain 98HAH33).